Reading from the N-terminus, the 391-residue chain is Multidrug resistance protein MdtL (391 aa).

12 helical membrane-spanning segments follow: residues 4–24 (FLICSFALVLLYPAGIDMYLV), 42–62 (IAFSVYLAGMAAAMLFAGKVA), 69–89 (PVAIPGAALFIIASVFCSLAE), 93–113 (LFLAGRFLQGLGAGCCYVVAF), 131–151 (LLNGITCIIPVLAPVLGHLIM), 158–178 (SLFWTMATMGIAVLMLSLFIL), 203–222 (FFLSRVVITTLSVSVILTFV), 245–265 (ALTAGVSMTVSFSTPFALGIF), 269–289 (TLMITSQVLFLAAGITLAVSP), 293–313 (VSLFGITLICAGFSVGFGVAM), 331–351 (LGIAQVCGSSLWIWLAAVVGI), and 356–376 (MLIGILIACSIVSLLLIMFVA).

This sequence belongs to the major facilitator superfamily. DHA1 family. MdtL (TC 2.A.1.2.22) subfamily.

It localises to the cell inner membrane. Confers resistance to chloramphenicol. The protein is Multidrug resistance protein MdtL of Escherichia coli O127:H6 (strain E2348/69 / EPEC).